Consider the following 267-residue polypeptide: Tryptophan synthase alpha chain (267 aa).

Active-site proton acceptor residues include glutamate 49 and aspartate 60.

The protein belongs to the TrpA family. Tetramer of two alpha and two beta chains.

The catalysed reaction is (1S,2R)-1-C-(indol-3-yl)glycerol 3-phosphate + L-serine = D-glyceraldehyde 3-phosphate + L-tryptophan + H2O. Its pathway is amino-acid biosynthesis; L-tryptophan biosynthesis; L-tryptophan from chorismate: step 5/5. Its function is as follows. The alpha subunit is responsible for the aldol cleavage of indoleglycerol phosphate to indole and glyceraldehyde 3-phosphate. The sequence is that of Tryptophan synthase alpha chain from Methylococcus capsulatus (strain ATCC 33009 / NCIMB 11132 / Bath).